The sequence spans 598 residues: Urease subunit alpha (598 aa).

Ni(2+) is bound by residues histidine 141, histidine 143, and lysine 223. Lysine 223 is subject to N6-carboxylysine. A substrate-binding site is contributed by histidine 225. Ni(2+)-binding residues include histidine 252 and histidine 278. Histidine 326 serves as the catalytic Proton donor. Aspartate 366 contributes to the Ni(2+) binding site.

The protein belongs to the metallo-dependent hydrolases superfamily. Urease alpha subunit family. In terms of assembly, heterotrimer of UreA (gamma), UreB (beta) and UreC (alpha) subunits. Three heterotrimers associate to form the active enzyme. Ni cation is required as a cofactor. In terms of processing, carboxylation allows a single lysine to coordinate two nickel ions.

It is found in the cytoplasm. It carries out the reaction urea + 2 H2O + H(+) = hydrogencarbonate + 2 NH4(+). Its pathway is nitrogen metabolism; urea degradation; CO(2) and NH(3) from urea (urease route): step 1/1. The protein is Urease subunit alpha of Ureaplasma parvum serovar 3 (strain ATCC 27815 / 27 / NCTC 11736).